Consider the following 208-residue polypeptide: Large ribosomal subunit protein uL3 (208 aa).

An N5-methylglutamine modification is found at glutamine 149.

The protein belongs to the universal ribosomal protein uL3 family. As to quaternary structure, part of the 50S ribosomal subunit. Forms a cluster with proteins L14 and L19. In terms of processing, methylated by PrmB.

In terms of biological role, one of the primary rRNA binding proteins, it binds directly near the 3'-end of the 23S rRNA, where it nucleates assembly of the 50S subunit. This Actinobacillus pleuropneumoniae serotype 5b (strain L20) protein is Large ribosomal subunit protein uL3.